We begin with the raw amino-acid sequence, 486 residues long: NADH-quinone oxidoreductase subunit N (486 aa).

The next 14 helical transmembrane spans lie at 8 to 28 (LTALLPLLIIMLTVITVILSI), 36 to 56 (FVAVFSILGLIFALCSLYFLI), 74 to 94 (ILYIGMILISSICTCIFSYPW), 104 to 124 (EFYLLVIISTLGAISLTISHH), 125 to 145 (MASFFINIELISLPMFGLIAY), 160 to 180 (IILSGVSSSFLLFGIAWVYSI), 201 to 221 (ILVVLFGISMILLSLFFKLSI), 239 to 259 (VLSFFSTAGKISVFSVLLNFL), 269 to 289 (VIYFILSLIIILSILVGNLMA), 298 to 318 (FLGYTSISQIGYLLIVLLVSH), 329 to 349 (AIYLCGYLFSNIACLGIVNLI), 376 to 396 (SVLTLVLISSAGIPMTLGFIG), 410 to 432 (WLIGFAFLIGSLLGLYCYLRIIL), and 459 to 479 (IVICISGIILLALGIYPNPLI).

It belongs to the complex I subunit 2 family. NDH-1 is composed of 13 different subunits. Subunits NuoA, H, J, K, L, M, N constitute the membrane sector of the complex.

The protein resides in the cell membrane. It catalyses the reaction a quinone + NADH + 5 H(+)(in) = a quinol + NAD(+) + 4 H(+)(out). NDH-1 shuttles electrons from NADH, via FMN and iron-sulfur (Fe-S) centers, to quinones in the respiratory chain. The immediate electron acceptor for the enzyme in this species is believed to be ubiquinone. Couples the redox reaction to proton translocation (for every two electrons transferred, four hydrogen ions are translocated across the cytoplasmic membrane), and thus conserves the redox energy in a proton gradient. This chain is NADH-quinone oxidoreductase subunit N, found in Buchnera aphidicola subsp. Acyrthosiphon pisum (strain APS) (Acyrthosiphon pisum symbiotic bacterium).